The following is a 683-amino-acid chain: DNA-directed RNA polymerase subunit beta' (683 aa).

Zn(2+)-binding residues include C69, C71, C87, and C90. Mg(2+) contacts are provided by D489, D491, and D493.

This sequence belongs to the RNA polymerase beta' chain family. RpoC1 subfamily. In terms of assembly, in plastids the minimal PEP RNA polymerase catalytic core is composed of four subunits: alpha, beta, beta', and beta''. When a (nuclear-encoded) sigma factor is associated with the core the holoenzyme is formed, which can initiate transcription. Mg(2+) is required as a cofactor. It depends on Zn(2+) as a cofactor.

It is found in the plastid. Its subcellular location is the chloroplast. It carries out the reaction RNA(n) + a ribonucleoside 5'-triphosphate = RNA(n+1) + diphosphate. DNA-dependent RNA polymerase catalyzes the transcription of DNA into RNA using the four ribonucleoside triphosphates as substrates. This chain is DNA-directed RNA polymerase subunit beta', found in Triticum aestivum (Wheat).